A 638-amino-acid polypeptide reads, in one-letter code: 1-deoxy-D-xylulose-5-phosphate synthase (638 aa).

Thiamine diphosphate is bound by residues His71 and 112 to 114 (SHA). Asp144 is a Mg(2+) binding site. Residues 145–146 (GA), Asn173, Tyr284, and Glu365 each bind thiamine diphosphate. Position 173 (Asn173) interacts with Mg(2+).

It belongs to the transketolase family. DXPS subfamily. In terms of assembly, homodimer. Mg(2+) serves as cofactor. The cofactor is thiamine diphosphate.

It catalyses the reaction D-glyceraldehyde 3-phosphate + pyruvate + H(+) = 1-deoxy-D-xylulose 5-phosphate + CO2. The protein operates within metabolic intermediate biosynthesis; 1-deoxy-D-xylulose 5-phosphate biosynthesis; 1-deoxy-D-xylulose 5-phosphate from D-glyceraldehyde 3-phosphate and pyruvate: step 1/1. Its function is as follows. Catalyzes the acyloin condensation reaction between C atoms 2 and 3 of pyruvate and glyceraldehyde 3-phosphate to yield 1-deoxy-D-xylulose-5-phosphate (DXP). This is 1-deoxy-D-xylulose-5-phosphate synthase from Mycobacterium sp. (strain JLS).